We begin with the raw amino-acid sequence, 691 residues long: Solute carrier family 28 member 3 (691 aa).

The interval 1-78 (MELRSTAAPR…HMEDDDEEMQ (78 aa)) is disordered. Residues 1-102 (MELRSTAAPR…FCRKHKTTLR (102 aa)) lie on the Cytoplasmic side of the membrane. Low complexity predominate over residues 21-30 (NEENFLENEN). Positions 31–42 (TSGNNSIRSRAV) are enriched in polar residues. Over residues 43-54 (QSREHTNTKQDE) the composition is skewed to basic and acidic residues. A helical membrane pass occupies residues 103 to 123 (HIIWGILLAGYLVMVISACVL). Topologically, residues 124 to 128 (NFHRA) are extracellular. The chain crosses the membrane as a helical span at residues 129 to 149 (LPLFVITVAAIFFVVWDHLMA). At 150–173 (KYEHRIDEMLSPGRRLLNSHWFWL) the chain is on the cytoplasmic side. Residues 174 to 194 (KWVIWSSLVLAVIFWLAFDTA) form a helical membrane-spanning segment. Topologically, residues 195–197 (KLG) are extracellular. The chain crosses the membrane as a helical span at residues 198–219 (QQQLVSFGGLIMYIVLLFLFSK). Residues 220 to 227 (YPTRVYWR) lie on the Cytoplasmic side of the membrane. The helical transmembrane segment at 228–247 (PVLWGIGLQFLLGLLILRTD) threads the bilayer. Residues 248–284 (PGFIAFDWLGRQVQTFLEYTDAGASFVFGEKYKDHFF) are Extracellular-facing. Residues 285–305 (AFKVLPIVVFFSTVMSMLYYL) traverse the membrane as a helical segment. Residues 306–329 (GLMQWIIRKVGWIMLVTTGSSPIE) are Cytoplasmic-facing. The helical intramembrane region spans 330–348 (SVVASGNIFVGQTESPLLV). At 349 to 361 (RPYLPYITKSELH) the chain is on the cytoplasmic side. The helical transmembrane segment at 362–384 (AIMTAGFSTIAGSVLGAYISFGV) threads the bilayer. Topologically, residues 385–386 (PS) are extracellular. The chain crosses the membrane as a helical span at residues 387–408 (SHLLTASVMSAPASLAAAKLFW). Residues 409–443 (PETEKPKITLKNAMKMESGDSGNLLEAATQGASSS) are Cytoplasmic-facing. The chain crosses the membrane as a helical span at residues 444–469 (ISLVANIAVNLIAFLALLSFMNSALS). At 470–507 (WFGNMFDYPQLSFELICSYIFMPFSFMMGVEWQDSFMV) the chain is on the extracellular side. The helical intramembrane region spans 508 to 527 (ARLIGYKTFFNEFVAYEHLS). At 528-566 (KWIHLRKEGGPKFVNGVQQYISIRSEIIATYALCGFANI) the chain is on the extracellular side. Residues 567-577 (GSLGIVIGGLT) form a helical membrane-spanning segment. At 578 to 590 (SMAPSRKRDIASG) the chain is on the cytoplasmic side. Residues 591 to 613 (AVRALIAGTVACFMTACIAGILS) traverse the membrane as a helical segment. At 614-691 (STPVDINCHH…FNCNGISNTF (78 aa)) the chain is on the extracellular side.

It belongs to the concentrative nucleoside transporter (CNT) (TC 2.A.41) family. In terms of assembly, homotrimer. In terms of tissue distribution, expressed in pancreas, bone marrow, trachea, mammary gland, liver, prostate, and regions of intestine, brain, lung, placenta, testis, kidney, and heart.

It is found in the cell membrane. Its subcellular location is the endoplasmic reticulum membrane. It carries out the reaction thymidine(out) + 2 Na(+)(out) = thymidine(in) + 2 Na(+)(in). The catalysed reaction is cytidine(out) + 2 Na(+)(out) = cytidine(in) + 2 Na(+)(in). It catalyses the reaction uridine(out) + 2 Na(+)(out) = uridine(in) + 2 Na(+)(in). The enzyme catalyses adenosine(out) + 2 Na(+)(out) = adenosine(in) + 2 Na(+)(in). It carries out the reaction guanosine(out) + 2 Na(+)(out) = guanosine(in) + 2 Na(+)(in). The catalysed reaction is inosine(out) + 2 Na(+)(out) = inosine(in) + 2 Na(+)(in). Sodium-dependent, pyrimidine- and purine-selective. Involved in the homeostasis of endogenous nucleosides. Exhibits the transport characteristics of the nucleoside transport system cib or N3 subtype (N3/cib) (with marked transport of both thymidine and inosine). Employs a 2:1 sodium/nucleoside ratio. Transports uridine. Also able to transport gemcitabine, 3'-azido-3'-deoxythymidine (AZT), ribavirin and 3-deazauridine. This Homo sapiens (Human) protein is Solute carrier family 28 member 3 (SLC28A3).